The chain runs to 404 residues: MPYNCCLPAMSCRTSCSSRPCVPPSCHGCTLPGACNIPANVGNCNWFCEGSFNGNEKETMQFLNDRLASYMEKVRQLERENAELECRIQERNQQQDPLVCPAYQAYFRTIEELQQKILCGKSENARLVVQIDNAKLASDDFRTKYETELSLRQLVEADINSLRRILDELTLCKSDLEAQVESLKEELLCLKQNHEQEVNTLRCQLGDRLNVEVDAAPTVDLNRVLNETRCQYEALVETNRREVEEWYTTQTEELNKQVVSSSEQLQSCQAEIIELRRTVNALEIELQAQHELRNSLENTLTESEARYSSQLSQVQCLITNVESQLGEIRADLERQNQEYQVLLDIRSRLECEINTYRGLLESEDCKLPCNPCATTNACDKPIGPCVPNPCVTRPRCGPCNTFVR.

The head stretch occupies residues 1-56 (MPYNCCLPAMSCRTSCSSRPCVPPSCHGCTLPGACNIPANVGNCNWFCEGSFNGNE). Residues 56 to 367 (EKETMQFLND…GLLESEDCKL (312 aa)) enclose the IF rod domain. The coil 1A stretch occupies residues 57–91 (KETMQFLNDRLASYMEKVRQLERENAELECRIQER). The linker 1 stretch occupies residues 92–102 (NQQQDPLVCPA). Residues 103–203 (YQAYFRTIEE…HEQEVNTLRC (101 aa)) form a coil 1B region. Residues 204-219 (QLGDRLNVEVDAAPTV) form a linker 12 region. The tract at residues 220-363 (DLNRVLNETR…NTYRGLLESE (144 aa)) is coil 2. The segment at 364 to 404 (DCKLPCNPCATTNACDKPIGPCVPNPCVTRPRCGPCNTFVR) is tail.

This sequence belongs to the intermediate filament family.

The sequence is that of Keratin, type I cuticular Ha3-I from Mus musculus (Mouse).